The following is a 208-amino-acid chain: Na(+)-translocating NADH-quinone reductase subunit D (208 aa).

Transmembrane regions (helical) follow at residues 42 to 62 (FVMAIAVTLVTGLSNLFVSLI), 72 to 92 (IIVQLAIIASLVIVVDQILKA), 103 to 123 (VFVGLIITNCIVMGRAEAFAM), 131 to 151 (FVDGIGNGLGYGSMLIIVAFF), and 178 to 198 (NGLFLLAPSAFFIIGFVIWGL).

The protein belongs to the NqrDE/RnfAE family. As to quaternary structure, composed of six subunits; NqrA, NqrB, NqrC, NqrD, NqrE and NqrF.

Its subcellular location is the cell inner membrane. It carries out the reaction a ubiquinone + n Na(+)(in) + NADH + H(+) = a ubiquinol + n Na(+)(out) + NAD(+). Its function is as follows. NQR complex catalyzes the reduction of ubiquinone-1 to ubiquinol by two successive reactions, coupled with the transport of Na(+) ions from the cytoplasm to the periplasm. NqrA to NqrE are probably involved in the second step, the conversion of ubisemiquinone to ubiquinol. The chain is Na(+)-translocating NADH-quinone reductase subunit D from Haemophilus influenzae (strain 86-028NP).